A 500-amino-acid polypeptide reads, in one-letter code: NF-kappa-B inhibitor epsilon (500 aa).

The span at 1-10 (MNQRRSESRP) shows a compositional bias: basic and acidic residues. 3 disordered regions span residues 1 to 66 (MNQR…PAWA), 84 to 215 (LSSL…YGSS), and 222 to 241 (SLLGGPEAEDPAPRLPLPHV). S157, S161, and S183 each carry phosphoserine. Residues 161 to 186 (SLRSLRSLPESTSAPASGPSDGSPQP) show a composition bias toward low complexity. Residues 196-209 (EPQEKEDADGERAD) show a composition bias toward basic and acidic residues. ANK repeat units lie at residues 258–291 (DGDTLVHLAVIHEAPAVLLCCLALLPQEVLDIQN), 293–322 (LYQTALHLAVHLDQPGAVRALVLKGASRAL), 326–355 (HGDTALHVACQRQHLACARCLLEGRPEPGR), 369–398 (QGLACLHIATLQKNQPLMELLLRNGADIDV), 403–432 (SGKTALHLAVETQERGLVQFLLQAGAQVDA), and 436–465 (NGCTPLHLAAGRGLMGISSTLCKAGADSLL).

This sequence belongs to the NF-kappa-B inhibitor family. In terms of assembly, interacts with RELA, REL, NFKB1 nuclear factor NF-kappa-B p50 subunit and NFKB2 nuclear factor NF-kappa-B p52 subunit. Interacts with HNRNPA2B1; the interaction may be mediated by the RRM2 domain of HNRNPA2B1, and HNRNPA2B1 may interact simultaneously with FAM76B and either NFKBIA or NFKBIE to form a complex. Serine phosphorylated; followed by proteasome-dependent degradation. As to expression, highly expressed in spleen, testis and lung, followed by kidney, pancreas, heart, placenta and brain. Also expressed in granulocytes and macrophages.

It localises to the cytoplasm. Sequesters NF-kappa-B transcription factor complexes in the cytoplasm, thereby inhibiting their activity. Sequestered complexes include NFKB1-RELA (p50-p65) and NFKB1-REL (p50-c-Rel) complexes. Limits B-cell activation in response to pathogens, and also plays an important role in B-cell development. This Homo sapiens (Human) protein is NF-kappa-B inhibitor epsilon (NFKBIE).